Here is a 695-residue protein sequence, read N- to C-terminus: Probable serine/threonine-protein kinase abkD (695 aa).

Polar residues predominate over residues 105 to 119 (TTKPQPCQAKPPSSK). The segment at 105–149 (TTKPQPCQAKPPSSKQQQQQQQQQQQQQQQQQQQQSKKKTSKDRL) is disordered. A coiled-coil region spans residues 118–150 (SKQQQQQQQQQQQQQQQQQQQQSKKKTSKDRLR). A compositionally biased stretch (low complexity) spans 120-139 (QQQQQQQQQQQQQQQQQQQQ). The helical transmembrane segment at 177-193 (TIASILAAIALIIYSYE) threads the bilayer. One can recognise a Protein kinase domain in the interval 317–695 (DFDRLPIAAA…LIKDQMKKLG (379 aa)). ATP contacts are provided by residues 323-331 (IAAASLAQV) and K345. Residue D477 is the Proton acceptor of the active site.

Belongs to the protein kinase superfamily. ADCK protein kinase family.

It is found in the membrane. The polypeptide is Probable serine/threonine-protein kinase abkD (abkD) (Dictyostelium discoideum (Social amoeba)).